The chain runs to 146 residues: Anti-sigma F factor (146 aa).

It belongs to the anti-sigma-factor family.

The catalysed reaction is L-seryl-[protein] + ATP = O-phospho-L-seryl-[protein] + ADP + H(+). It catalyses the reaction L-threonyl-[protein] + ATP = O-phospho-L-threonyl-[protein] + ADP + H(+). In terms of biological role, binds to sigma F and blocks its ability to form an RNA polymerase holoenzyme (E-sigma F). Phosphorylates SpoIIAA on a serine residue. This phosphorylation may enable SpoIIAA to act as an anti-anti-sigma factor that counteracts SpoIIAB and thus releases sigma F from inhibition. The chain is Anti-sigma F factor from Bacillus cytotoxicus (strain DSM 22905 / CIP 110041 / 391-98 / NVH 391-98).